The following is a 383-amino-acid chain: GDSL esterase/lipase At1g28610 (383 aa).

The N-terminal stretch at 1 to 22 (MASLDSLVSFFLSTLFVTIVSS) is a signal peptide. Serine 38 (nucleophile) is an active-site residue. N-linked (GlcNAc...) asparagine glycosylation is found at asparagine 134, asparagine 184, and asparagine 315. Active-site residues include aspartate 340 and histidine 343.

It belongs to the 'GDSL' lipolytic enzyme family.

The protein resides in the secreted. The polypeptide is GDSL esterase/lipase At1g28610 (Arabidopsis thaliana (Mouse-ear cress)).